The primary structure comprises 645 residues: Glucans biosynthesis glucosyltransferase H (645 aa).

The interval 1–28 (MDGTVTLSPAPTDLPPVSSLDAGQPTLP) is disordered. The next 7 membrane-spanning stretches (helical) occupy residues 64–84 (LIGG…SVLW), 98–118 (LFVL…AGFI), 423–443 (APMW…GAGI), 465–485 (AIWI…LGYI), 504–524 (ALSI…VMYL), 558–578 (SYGG…LVSP), and 580–600 (LAAW…VVAV).

The protein belongs to the glycosyltransferase 2 family. OpgH subfamily.

It is found in the cell inner membrane. It functions in the pathway glycan metabolism; osmoregulated periplasmic glucan (OPG) biosynthesis. Functionally, involved in the biosynthesis of osmoregulated periplasmic glucans (OPGs). The chain is Glucans biosynthesis glucosyltransferase H from Xanthomonas campestris pv. campestris (strain B100).